The following is a 170-amino-acid chain: Non-classical export protein 102 (170 aa).

Residues 1-11 (MLAIGDVILRA) lie on the Cytoplasmic side of the membrane. In terms of domain architecture, MARVEL spans 6-141 (DVILRAFNFV…TFIFIASAIF (136 aa)). The chain crosses the membrane as a helical span at residues 12–32 (FNFVFLVIALGLTGSLAATTI). Residues 33–38 (TQHNPQ) lie on the Extracellular side of the membrane. A helical membrane pass occupies residues 39 to 61 (INFAVFAAAFGLLTSSFYGVFAY). Residues 62 to 76 (FVAAFAWPVILFVFD) are Cytoplasmic-facing. A helical membrane pass occupies residues 77 to 97 (FLNFVFTFAAATAIAAGIRAH). Over 98-125 (SCSNQDYLDDNNIAQGSSGRCRKAQAST) the chain is Extracellular. A helical membrane pass occupies residues 126 to 146 (AFLYFSTFIFIASAIFSAISL). Residues 147–170 (SKGGLFGHSSRPAPRTGVPTMSQV) lie on the Cytoplasmic side of the membrane.

This sequence belongs to the NCE102 family.

The protein resides in the cell membrane. Its function is as follows. Involved in membrane organization. Involved in a novel pathway of export of proteins that lack a cleavable signal sequence. Non-classical export pathway also functions as an alternative clearance/detoxification pathway to eliminate damaged material, when the basic repair pathway is not sufficient. Regulates actin organization and subsequent morphogenesis and pathogenesis. The chain is Non-classical export protein 102 from Candida albicans (strain SC5314 / ATCC MYA-2876) (Yeast).